The chain runs to 259 residues: Isoepoxydon dehydrogenase patN (259 aa).

2 residues coordinate NADP(+): Asn96 and Arg125. Residues Ser143 and Ser144 each act as proton donor in the active site. NADP(+) is bound by residues Tyr158, Lys162, and Ile191. The active-site Proton acceptor is the Tyr158. Lys162 serves as the catalytic Lowers pKa of active site Tyr.

Belongs to the short-chain dehydrogenases/reductases (SDR) family.

The protein localises to the cytoplasm. The protein resides in the cytosol. It catalyses the reaction isoepoxydon + NADP(+) = phyllostine + NADPH + H(+). The protein operates within mycotoxin biosynthesis; patulin biosynthesis. Functionally, isoepoxydon dehydrogenase; part of the gene cluster that mediates the biosynthesis of patulin, an acetate-derived tetraketide mycotoxin produced by several fungal species that shows antimicrobial properties against several bacteria. PatN catalyzes the conversion of isoepoxydon into phyllostine. The pathway begins with the synthesis of 6-methylsalicylic acid by the polyketide synthase (PKS) patK via condensation of acetate and malonate units. The 6-methylsalicylic acid decarboxylase patG then catalyzes the decarboxylation of 6-methylsalicylic acid to yield m-cresol (also known as 3-methylphenol). These first reactions occur in the cytosol. The intermediate m-cresol is then transported into the endoplasmic reticulum where the cytochrome P450 monooxygenase patH converts it to m-hydroxybenzyl alcohol, which is further converted to gentisyl alcohol by the cytochrome P450 monooxygenase patI. The oxidoreductases patJ and patO further convert gentisyl alcohol to isoepoxydon in the vacuole. PatN catalyzes then the transformation of isoepoxydon into phyllostine. The cluster protein patF is responsible for the conversion from phyllostine to neopatulin whereas the alcohol dehydrogenase patD converts neopatulin to E-ascladiol. The steps between isoepoxydon and E-ascladiol occur in the cytosol, and E-ascladiol is probably secreted to the extracellular space by one of the cluster-specific transporters patC or patM. Finally, the secreted patulin synthase patE catalyzes the conversion of E-ascladiol to patulin. In Aspergillus clavatus (strain ATCC 1007 / CBS 513.65 / DSM 816 / NCTC 3887 / NRRL 1 / QM 1276 / 107), this protein is Isoepoxydon dehydrogenase patN.